A 91-amino-acid polypeptide reads, in one-letter code: Probable Fe(2+)-trafficking protein (91 aa).

Belongs to the Fe(2+)-trafficking protein family.

Could be a mediator in iron transactions between iron acquisition and iron-requiring processes, such as synthesis and/or repair of Fe-S clusters in biosynthetic enzymes. This Ralstonia pickettii (strain 12J) protein is Probable Fe(2+)-trafficking protein.